The sequence spans 541 residues: MKLQAVMETLQRQQRARLQQELEARQLQQDSSEGRTPPSVGYPGNGSEEAEPEALKIQRAQAAALAAMRAAAAGLSQQPSPAASDEEEEDGESMASDEEDEKERDGESERYPDMGSEEEDLKGKWDEDDFEDEGEEDDYEDMEEGMGVSEAGRVGKGSTLPPKHPNPQAFPTQRSVGAERAGLPHTGHPQLQDHGDWTYEEQFKQLYELDGDPKRKEFLDDLFSFMQKRGTPVNRIPIMAKQVLDLYMLYVLVTEKGGLVEVINKKLWREITKGLNLPTSITSAAFTLRTQYMKYLYPYECEKRGLSNPNELQAAIDSNRREGRRQSFGGSLFTYSPSGAPSMLSSPKLQVSALSLGGVATNGSSLSSMQKIKKEEDSPISLTVPPRIPVSLAGHSMVAAQVAAQAAALEQLREKLESGEPPEKKMALGTEEQQRLQRAIQHNLLAMTAQLPMNIRINSQAEGRQDSAVNLTTNGTNSISMSVELNGIVYTGVLFAQPPTSASGTSKGSSNRTGSIGGGSSTSQAAPPPAPSAPTSNNPSP.

Residues 17 to 172 form a disordered region; that stretch reads RLQQELEARQ…KHPNPQAFPT (156 aa). The span at 55–73 shows a compositional bias: low complexity; that stretch reads LKIQRAQAAALAAMRAAAA. Residues 84 to 102 show a composition bias toward acidic residues; the sequence is SDEEEEDGESMASDEEDEK. A compositionally biased stretch (basic and acidic residues) spans 103–112; the sequence is ERDGESERYP. The segment covering 115–144 has biased composition (acidic residues); sequence GSEEEDLKGKWDEDDFEDEGEEDDYEDMEE. The 93-residue stretch at 212-304 folds into the ARID domain; it reads DPKRKEFLDD…YLYPYECEKR (93 aa). Positions 407-501 constitute an REKLES domain; that stretch reads AALEQLREKL…GVLFAQPPTS (95 aa). The important for nuclear localization stretch occupies residues 408-450; it reads ALEQLREKLESGEPPEKKMALGTEEQQRLQRAIQHNLLAMTAQ. Positions 452–473 are homodimerization; the sequence is PMNIRINSQAEGRQDSAVNLTT. The important for cytoplasmic localization stretch occupies residues 497–504; that stretch reads QPPTSASG. The disordered stretch occupies residues 499 to 541; the sequence is PTSASGTSKGSSNRTGSIGGGSSTSQAAPPPAPSAPTSNNPSP.

In terms of assembly, homodimer.

The protein localises to the nucleus. It is found in the cytoplasm. In terms of biological role, transcription factor required for smad1 and smad2-mediated responses to TGFbeta during mesoderm induction. This Xenopus tropicalis (Western clawed frog) protein is AT-rich interactive domain-containing protein 3A (arid3a).